Consider the following 269-residue polypeptide: 2-heptyl-3-hydroxy-4(1H)-quinolone dioxygenase (269 aa).

H97 serves as a coordination point for substrate. Catalysis depends on H246, which acts as the Proton donor/acceptor.

The protein belongs to the AB hydrolase superfamily. As to quaternary structure, monomer.

The enzyme catalyses 2-heptyl-3-hydroxy-4(1H)-quinolone + O2 = N-octanoylanthranilate + CO + H(+). Functionally, ring-cleaving dioxygenase involved in the degradation pathway of the Pseudomonas aeruginosa quorum sensing signal molecules HHQ (2-heptyl-4-quinolone) and PQS (2-heptyl-3-hydroxy-4(1H)-quinolone) to anthranilate. Catalyzes the cleavage of PQS to form N-octanoylanthranilate and carbon monoxide. Thus, leads to the inactivation of PQS that plays a central role in the regulation of virulence factor production by P.aeruginosa, thereby quenching the production of antimicrobials, which may contribute to the competitiveness of M.abscessus in presence of P.aeruginosa. In vitro, can also use other 2-alkyl-3-hydroxy-4(1H)-quinolone (AHQ) substrates with shorter alkyl substituents at C2, but with lower efficiency. This Mycobacteroides abscessus (strain ATCC 19977 / DSM 44196 / CCUG 20993 / CIP 104536 / JCM 13569 / NCTC 13031 / TMC 1543 / L948) (Mycobacterium abscessus) protein is 2-heptyl-3-hydroxy-4(1H)-quinolone dioxygenase.